Here is a 106-residue protein sequence, read N- to C-terminus: Iron-sulfur cluster assembly protein CyaY (106 aa).

It belongs to the frataxin family.

In terms of biological role, involved in iron-sulfur (Fe-S) cluster assembly. May act as a regulator of Fe-S biogenesis. The chain is Iron-sulfur cluster assembly protein CyaY from Photorhabdus laumondii subsp. laumondii (strain DSM 15139 / CIP 105565 / TT01) (Photorhabdus luminescens subsp. laumondii).